The sequence spans 241 residues: Platelet-derived growth factor subunit B (241 aa).

A signal peptide spans 1 to 20; the sequence is MNRCWALFLSLCCYLRLVSA. The propeptide at 21–81 is removed in mature form; the sequence is EGDPIPEELY…ELESLARGRR (61 aa). N-linked (GlcNAc...) asparagine glycosylation is present at Asn-63. Cystine bridges form between Cys-97–Cys-141, Cys-130–Cys-178, and Cys-134–Cys-180. Residues 191-241 constitute a propeptide, removed in mature form; it reads RSPGGSQEQRAKTPQTRVTIRTVRVRRPPKGKHRKFKHTHDKTALKETLGA. The span at 216 to 230 shows a compositional bias: basic residues; the sequence is RRPPKGKHRKFKHTH. The tract at residues 216-241 is disordered; sequence RRPPKGKHRKFKHTHDKTALKETLGA.

It belongs to the PDGF/VEGF growth factor family. As to quaternary structure, antiparallel homodimer; disulfide-linked. Antiparallel heterodimer with PDGFA; disulfide-linked. The PDGFB homodimer interacts with PDGFRA and PDGFRB homodimers, and with heterodimers formed by PDGFRA and PDGFRB. The heterodimer composed of PDGFA and PDGFB interacts with PDGFRB homodimers, and with heterodimers formed by PDGFRA and PDGFRB. Interacts with XLKD1. Interacts with LRP1. Interacts with SORL1 (via the N-terminal ectodomain). Interacts with CD82; this interaction inhibits PDGFB-mediated signaling pathway. Expressed at high levels in the heart, brain (sustantia nigra), placenta and fetal kidney. Expressed at moderate levels in the brain (hippocampus), skeletal muscle, kidney and lung.

It localises to the secreted. In terms of biological role, growth factor that plays an essential role in the regulation of embryonic development, cell proliferation, cell migration, survival and chemotaxis. Potent mitogen for cells of mesenchymal origin. Required for normal proliferation and recruitment of pericytes and vascular smooth muscle cells in the central nervous system, skin, lung, heart and placenta. Required for normal blood vessel development, and for normal development of kidney glomeruli. Plays an important role in wound healing. Signaling is modulated by the formation of heterodimers with PDGFA. The sequence is that of Platelet-derived growth factor subunit B (PDGFB) from Homo sapiens (Human).